Here is a 142-residue protein sequence, read N- to C-terminus: Hemoglobin F-I (142 aa).

Residues 2–142 enclose the Globin domain; that stretch reads GLTTAQIKAI…AAGVLVAAMK (141 aa). Position 95 (His-95) interacts with heme b.

It belongs to the globin family. In terms of assembly, homotetramer.

Hemoglobin F-I appears to function in storage, rather than transport of oxygen. The polypeptide is Hemoglobin F-I (Urechis caupo (Innkeeper worm)).